A 2475-amino-acid polypeptide reads, in one-letter code: Polyprotein pp220 (2475 aa).

Gly-2 is lipidated: N-myristoyl glycine; by host. Residues 2185 to 2212 are a coiled coil; the sequence is KNQLIADLAAIREQLVRMRREVENMVQT.

Belongs to the asfivirus polyprotein pp220 family. Post-translationally, the polyprotein is not glycosylated. In terms of processing, specific enzymatic cleavages in vivo by the viral pS273R protease yield mature proteins.

The protein resides in the host cytoplasm. It localises to the host perinuclear region. Its subcellular location is the virion. It is found in the host nucleus. Its function is as follows. Essential for the core assembly. Its myristoyl moiety may function as a membrane-anchoring signal to bind the developing core shell to the inner viral envelope. The structural protein p34 is a component of the virus core shell. In terms of biological role, the structural protein p14 is a component of the virus core shell. Functionally, the structural protein p37 is a component of the virus core shell. Its function is as follows. The structural protein p150 is a component of the virus core shell. The sequence is that of Polyprotein pp220 from African swine fever virus (isolate Pig/Kenya/KEN-50/1950) (ASFV).